We begin with the raw amino-acid sequence, 360 residues long: Aurora kinase B (360 aa).

The Protein kinase domain maps to 93 to 343 (FDIGRPLGKG…LKGVMEHPWV (251 aa)). ATP is bound by residues 99–107 (LGKGKFGNV) and K122. The active-site Proton acceptor is D216.

It belongs to the protein kinase superfamily. Ser/Thr protein kinase family. Aurora subfamily. As to quaternary structure, component of the chromosomal passenger complex (CPC).

Its subcellular location is the nucleus. It is found in the chromosome. The protein localises to the centromere. It localises to the cytoplasm. The protein resides in the cytoskeleton. Its subcellular location is the spindle. It is found in the midbody. The enzyme catalyses L-seryl-[protein] + ATP = O-phospho-L-seryl-[protein] + ADP + H(+). It carries out the reaction L-threonyl-[protein] + ATP = O-phospho-L-threonyl-[protein] + ADP + H(+). With respect to regulation, kinase activity is stimulated by cell-cycle specific phosphorylation. Functionally, serine/threonine-protein kinase component of the chromosomal passenger complex (CPC), a complex that acts as a key regulator of mitosis. The CPC complex has essential functions at the centromere in ensuring correct chromosome alignment and segregation and is required for chromatin-induced microtubule stabilization and spindle assembly. Involved in the bipolar attachment of spindle microtubules to kinetochores and is a key regulator for the onset of cytokinesis during mitosis. Required for central/midzone spindle assembly and cleavage furrow formation. Key component of the cytokinesis checkpoint, a process required to delay abscission to prevent both premature resolution of intercellular chromosome bridges and accumulation of DNA damage. Phosphorylates 'Ser-10' of histone H3 during mitosis. The polypeptide is Aurora kinase B (Xenopus tropicalis (Western clawed frog)).